The sequence spans 289 residues: Agroclavine dehydrogenase (289 aa).

Belongs to the fgaFS/easG family. As to quaternary structure, monomer.

The enzyme catalyses agroclavine + NADP(+) = didehydroagroclavine + NADPH + H(+). It functions in the pathway alkaloid biosynthesis; ergot alkaloid biosynthesis. Its function is as follows. Agroclavine dehydrogenase; part of the gene cluster that mediates the biosynthesis of fungal ergot alkaloid ergovaline, the predominant ergopeptine product in E.festucae var. lolii. DmaW catalyzes the first step of ergot alkaloid biosynthesis by condensing dimethylallyl diphosphate (DMAP) and tryptophan to form 4-dimethylallyl-L-tryptophan. The second step is catalyzed by the methyltransferase easF that methylates 4-dimethylallyl-L-tryptophan in the presence of S-adenosyl-L-methionine, resulting in the formation of 4-dimethylallyl-L-abrine. The catalase easC and the FAD-dependent oxidoreductase easE then transform 4-dimethylallyl-L-abrine to chanoclavine-I which is further oxidized by easD in the presence of NAD(+), resulting in the formation of chanoclavine-I aldehyde. Agroclavine dehydrogenase easG then mediates the conversion of chanoclavine-I aldehyde to agroclavine via a non-enzymatic adduct reaction: the substrate is an iminium intermediate that is formed spontaneously from chanoclavine-I aldehyde in the presence of glutathione. Further conversion of agroclavine to paspalic acid is a two-step process involving oxidation of agroclavine to elymoclavine and of elymoclavine to paspalic acid, the second step being performed by the elymoclavine oxidase cloA. However, cloA does not encode a functional enzyme indicating that C.fusiformis terminates its ergot alkaloid pathway at elymoclavine. In Claviceps fusiformis (Ergot fungus), this protein is Agroclavine dehydrogenase.